We begin with the raw amino-acid sequence, 251 residues long: SNAP25 homologous protein SNAP29 (251 aa).

Positions 1-52 are disordered; that stretch reads MAPKNSSWNPFDDEKEAAKSFSLNPFDDDDDDKEVEKRFTSSLKPSGGKENQ. Residues 40-52 are compositionally biased toward polar residues; that stretch reads TSSLKPSGGKENQ. The region spanning 186-248 is the t-SNARE coiled-coil homology domain; it reads KTQIAKQDEA…KQSNQRARYL (63 aa).

It belongs to the SNAP-25 family.

It is found in the membrane. The protein localises to the cytoplasm. In terms of biological role, SNAREs, soluble N-ethylmaleimide-sensitive factor-attachment protein receptors, are essential proteins for fusion of cellular membranes. SNAREs localized on opposing membranes assemble to form a trans-SNARE complex, an extended, parallel four alpha-helical bundle that drives membrane fusion. The protein is SNAP25 homologous protein SNAP29 (SNAP29) of Arabidopsis thaliana (Mouse-ear cress).